We begin with the raw amino-acid sequence, 430 residues long: uncharacterized protein (430 aa).

12 consecutive transmembrane segments (helical) span residues 18–38 (LFLLTIGGLYSLGIALSNTFV), 49–69 (FIDLAIYNLSIVTMQPITFYL), 80–100 (VFILRFGVIFLAAFYLSVLLA), 109–129 (VLIGAVLGVGYGFYWLAFNVL), 145–165 (FMGILSSSAGMIGPIVAGFVI), 175–195 (TVIFSLSLSLFALAVVMSFFL), 235–255 (IFVFLISVFVFIETNSELALG), 256–276 (TFGLVNSAVSFFAYYFASRLI), 285–305 (ILLGGLILYGALFLILFHMSF), 307–327 (TLLTYGVFIAIGYPLLLVPYV), 353–373 (MFLNAGRIVSILCFLLIVALL), and 377–397 (VGIPLSLAILGIGHPLIYYFV). The segment at 407–430 (GENETMEEDGQKRVTEPTLLKGER) is disordered. Over residues 415 to 430 (DGQKRVTEPTLLKGER) the composition is skewed to basic and acidic residues.

It is found in the cell membrane. This is an uncharacterized protein from Bacillus subtilis (strain 168).